The primary structure comprises 413 residues: Arginine biosynthesis bifunctional protein ArgJ (413 aa).

Substrate is bound by residues Thr160, Lys186, Thr197, Glu284, Asn408, and Ser413. Thr197 acts as the Nucleophile in catalysis.

The protein belongs to the ArgJ family. As to quaternary structure, heterotetramer of two alpha and two beta chains.

The protein resides in the cytoplasm. It carries out the reaction N(2)-acetyl-L-ornithine + L-glutamate = N-acetyl-L-glutamate + L-ornithine. The catalysed reaction is L-glutamate + acetyl-CoA = N-acetyl-L-glutamate + CoA + H(+). The protein operates within amino-acid biosynthesis; L-arginine biosynthesis; L-ornithine and N-acetyl-L-glutamate from L-glutamate and N(2)-acetyl-L-ornithine (cyclic): step 1/1. Its pathway is amino-acid biosynthesis; L-arginine biosynthesis; N(2)-acetyl-L-ornithine from L-glutamate: step 1/4. In terms of biological role, catalyzes two activities which are involved in the cyclic version of arginine biosynthesis: the synthesis of N-acetylglutamate from glutamate and acetyl-CoA as the acetyl donor, and of ornithine by transacetylation between N(2)-acetylornithine and glutamate. In Burkholderia pseudomallei (strain 1710b), this protein is Arginine biosynthesis bifunctional protein ArgJ.